The chain runs to 217 residues: Ribonuclease HII (217 aa).

The RNase H type-2 domain occupies Ser-27 to Cys-216. A divalent metal cation is bound by residues Asp-33, Glu-34, and Asp-126.

The protein belongs to the RNase HII family. It depends on Mn(2+) as a cofactor. The cofactor is Mg(2+).

The protein resides in the cytoplasm. The enzyme catalyses Endonucleolytic cleavage to 5'-phosphomonoester.. Its function is as follows. Endonuclease that specifically degrades the RNA of RNA-DNA hybrids. This Chlamydia muridarum (strain MoPn / Nigg) protein is Ribonuclease HII (rnhB).